We begin with the raw amino-acid sequence, 229 residues long: Phosphoglycolate phosphatase (229 aa).

Asp13 serves as the catalytic Nucleophile. Residues Asp13, Asp15, and Asp178 each coordinate Mg(2+).

It belongs to the HAD-like hydrolase superfamily. CbbY/CbbZ/Gph/YieH family. It depends on Mg(2+) as a cofactor.

The catalysed reaction is 2-phosphoglycolate + H2O = glycolate + phosphate. Its pathway is organic acid metabolism; glycolate biosynthesis; glycolate from 2-phosphoglycolate: step 1/1. Functionally, specifically catalyzes the dephosphorylation of 2-phosphoglycolate. Is involved in the dissimilation of the intracellular 2-phosphoglycolate formed during the DNA repair of 3'-phosphoglycolate ends, a major class of DNA lesions induced by oxidative stress. The chain is Phosphoglycolate phosphatase from Photobacterium profundum (strain SS9).